The following is a 429-amino-acid chain: SET domain-containing protein 8 (429 aa).

Residues 17 to 232 (KQITIKKIRK…ENEEVTINYG (216 aa)) enclose the SET domain.

Belongs to the class V-like SAM-binding methyltransferase superfamily.

The protein resides in the cytoplasm. The protein localises to the nucleus. The polypeptide is SET domain-containing protein 8 (set8) (Schizosaccharomyces pombe (strain 972 / ATCC 24843) (Fission yeast)).